We begin with the raw amino-acid sequence, 1059 residues long: Zinc finger protein 658 (1059 aa).

Residues 8 to 79 (VSFQDVTVEF…EDEFLNQRYP (72 aa)) form the KRAB domain. A Glycyl lysine isopeptide (Lys-Gly) (interchain with G-Cter in SUMO2) cross-link involves residue K178. The segment at 325 to 347 (FESNKCEENFSQSSAHIVHQKTQ) adopts a C2H2-type 1; degenerate zinc-finger fold. The segment at 352-375 (FGEHNECTDALYQKLDFTAHQRIH) adopts a C2H2-type 2; degenerate zinc-finger fold. The segment at 381 to 406 (YLSDEHGKCRKSFYRKAHLIQHQRPH) adopts a C2H2-type 3; degenerate zinc-finger fold. The segment at 412–434 (YQYEECAKSFCSSSHPIQHPGTY) adopts a C2H2-type 4; degenerate zinc-finger fold. 14 consecutive C2H2-type zinc fingers follow at residues 440–462 (YECN…LRIH), 518–540 (YECI…QRIH), 546–568 (YECV…QRVH), 574–596 (YECN…QRIH), 602–624 (YECS…HRIH), 630–652 (YECN…QRIH), 658–680 (YECN…QRIH), 686–708 (YECS…QRIH), 714–736 (YECN…QNIH), 742–764 (YECS…RRIH), 770–792 (YECS…ERIH), 798–820 (YECN…QRIH), 826–848 (YECN…QRIH), and 854–876 (YECN…HRIH). Residues 882–904 (YECNDCGKTFSKTSHLRAHLRTR) form a C2H2-type 19; degenerate zinc finger. 5 C2H2-type zinc fingers span residues 910–932 (YECS…QRVH), 938–960 (YECN…QRIH), 966–988 (YECN…QRIH), 994–1016 (YECN…QRIH), and 1022–1045 (YECD…TRMH).

It belongs to the krueppel C2H2-type zinc-finger protein family.

Its subcellular location is the nucleus. In terms of biological role, mediates transcriptional repression in response to zinc. Represses several genes, including SLC30A5, SLC30A10 and CBWD1, by binding to the zinc transcriptional regulatory element (ZTRE) (5'-C[AC]C[TAG]CC[TC]-N(0-50)-[GA]G[ATC]G[TG]G-3') found in the promoter region. May play a role in the control of ribosome biogenesis, regulating predominantly rRNA levels, as well as those of several ribosomal proteins, thus coordinating this highly zinc-demanding process with the available zinc supply. This chain is Zinc finger protein 658 (ZNF658), found in Homo sapiens (Human).